The primary structure comprises 1216 residues: ATP-dependent helicase/nuclease subunit A (1216 aa).

The UvrD-like helicase ATP-binding domain maps to 26–488; it reads QKKTAEQIEA…ILLKENFRSS (463 aa). An ATP-binding site is contributed by 47–54; sequence ASAGSGKT. One can recognise a UvrD-like helicase C-terminal domain in the interval 515-802; it reads KHQLVFANTK…ELMTIHKSKG (288 aa).

The protein belongs to the helicase family. AddA subfamily. As to quaternary structure, heterodimer of AddA and AddB/RexB. It depends on Mg(2+) as a cofactor.

It carries out the reaction Couples ATP hydrolysis with the unwinding of duplex DNA by translocating in the 3'-5' direction.. The catalysed reaction is ATP + H2O = ADP + phosphate + H(+). Functionally, the heterodimer acts as both an ATP-dependent DNA helicase and an ATP-dependent, dual-direction single-stranded exonuclease. Recognizes the chi site generating a DNA molecule suitable for the initiation of homologous recombination. The AddA nuclease domain is required for chi fragment generation; this subunit has the helicase and 3' -&gt; 5' nuclease activities. The chain is ATP-dependent helicase/nuclease subunit A from Streptococcus pneumoniae (strain CGSP14).